A 513-amino-acid polypeptide reads, in one-letter code: Maturase K (513 aa).

This sequence belongs to the intron maturase 2 family. MatK subfamily.

The protein resides in the plastid. The protein localises to the chloroplast. Functionally, usually encoded in the trnK tRNA gene intron. Probably assists in splicing its own and other chloroplast group II introns. The polypeptide is Maturase K (Pinus parviflora (Japanese white pine)).